A 131-amino-acid chain; its full sequence is Transcription antitermination protein NusB (131 aa).

Belongs to the NusB family.

In terms of biological role, involved in transcription antitermination. Required for transcription of ribosomal RNA (rRNA) genes. Binds specifically to the boxA antiterminator sequence of the ribosomal RNA (rrn) operons. The polypeptide is Transcription antitermination protein NusB (Agathobacter rectalis (strain ATCC 33656 / DSM 3377 / JCM 17463 / KCTC 5835 / VPI 0990) (Eubacterium rectale)).